The following is a 351-amino-acid chain: Probable cobalt-factor III C(17)-methyltransferase (351 aa).

Belongs to the precorrin methyltransferase family.

It carries out the reaction Co(II)-factor III + S-adenosyl-L-methionine + H(+) = Co(II)-factor IV + S-adenosyl-L-homocysteine. It participates in cofactor biosynthesis; adenosylcobalamin biosynthesis; cob(II)yrinate a,c-diamide from sirohydrochlorin (anaerobic route): step 3/10. In terms of biological role, methyltransferase that likely catalyzes the ring contraction and methylation of C-17 in cobalt-factor III to form cobalt-factor IV. May also convert cobalt-precorrin-3 to cobalt-precorrin-4. In Methanothermobacter thermautotrophicus (strain ATCC 29096 / DSM 1053 / JCM 10044 / NBRC 100330 / Delta H) (Methanobacterium thermoautotrophicum), this protein is Probable cobalt-factor III C(17)-methyltransferase (cbiH).